A 219-amino-acid polypeptide reads, in one-letter code: Segregation and condensation protein B (219 aa).

Residues 193-219 (SLFAGGEEPSAEAADGGAGESTHGEEE) are disordered. A compositionally biased stretch (low complexity) spans 196 to 207 (AGGEEPSAEAAD).

This sequence belongs to the ScpB family. Homodimer. Homodimerization may be required to stabilize the binding of ScpA to the Smc head domains. Component of a cohesin-like complex composed of ScpA, ScpB and the Smc homodimer, in which ScpA and ScpB bind to the head domain of Smc. The presence of the three proteins is required for the association of the complex with DNA.

It localises to the cytoplasm. In terms of biological role, participates in chromosomal partition during cell division. May act via the formation of a condensin-like complex containing Smc and ScpA that pull DNA away from mid-cell into both cell halves. The chain is Segregation and condensation protein B from Symbiobacterium thermophilum (strain DSM 24528 / JCM 14929 / IAM 14863 / T).